Here is a 207-residue protein sequence, read N- to C-terminus: Alpha-1-acid glycoprotein 2 (207 aa).

Residues Met-1–Ala-18 form the signal peptide. Gln-19 carries the post-translational modification Pyrrolidone carboxylic acid. 5 N-linked (GlcNAc...) asparagine glycosylation sites follow: Asn-25, Asn-34, Asn-76, Asn-94, and Asn-104. A disulfide bond links Cys-91 and Cys-184. Positions Glu-188 to Ala-207 are disordered.

It belongs to the calycin superfamily. Lipocalin family. In terms of tissue distribution, expressed by the liver and secreted in plasma.

The protein resides in the secreted. In terms of biological role, functions as a transport protein in the blood stream. Binds various ligands in the interior of its beta-barrel domain. Appears to function in modulating the activity of the immune system during the acute-phase reaction. In Mus musculus (Mouse), this protein is Alpha-1-acid glycoprotein 2 (Orm2).